The following is an 85-amino-acid chain: Sugar transporter SemiSWEET (85 aa).

The PQ-loop domain occupies 2 to 59; sequence ENLIGYVAAFLTTVSFLPQVLRVVMTKQTRDISRNMYIMFFLGVVLWFVYGILRSDLP. Helical transmembrane passes span 5-25, 33-53, and 57-77; these read IGYV…LRVV, ISRN…VYGI, and DLPI…ILYY.

Homodimer.

It localises to the cell membrane. Its function is as follows. The homodimer mediates transmembrane sugar transport down a concentration gradient. Transport is probably effected by rocking-type movements, where a cargo-binding cavity opens first on one and then on the other side of the membrane. The sequence is that of Sugar transporter SemiSWEET from Leptospira biflexa serovar Patoc (strain Patoc 1 / ATCC 23582 / Paris).